A 667-amino-acid chain; its full sequence is Beta-galactosidase LacA (667 aa).

R109 lines the substrate pocket. Residue C113 coordinates Zn(2+). N147 lines the substrate pocket. E148 serves as the catalytic Proton donor. C153, C155, and C158 together coordinate Zn(2+). E307 functions as the Nucleophile in the catalytic mechanism. Substrate is bound by residues W315 and 355-358 (EKFH).

This sequence belongs to the glycosyl hydrolase 42 family.

It catalyses the reaction Hydrolysis of terminal non-reducing beta-D-galactose residues in beta-D-galactosides.. Hydrolyzes lactose, oNP-galactoside (oNPG), pNP-galactosidase (pNPG), pNP-mannoside, pNP-glucoside, pNP-fucoside, pNP-N-acetylglucosamide, but not pNP-arabinoside or 4-methylumbelliferyl-beta-galactopyranoside (MUG). Transgalactosylates lactose at 10 g/L, but not at 270 g/L. This is Beta-galactosidase LacA from Lactobacillus acidophilus.